The sequence spans 283 residues: Nucleotide-binding protein IL0393 (283 aa).

8–15 serves as a coordination point for ATP; the sequence is GRSGSGKT. 56-59 contacts GTP; sequence DVRN.

This sequence belongs to the RapZ-like family.

Displays ATPase and GTPase activities. This Idiomarina loihiensis (strain ATCC BAA-735 / DSM 15497 / L2-TR) protein is Nucleotide-binding protein IL0393.